A 462-amino-acid polypeptide reads, in one-letter code: Trigger factor (462 aa).

The region spanning 163-259 is the PPIase FKBP-type domain; sequence TDYVNIDLQR…VNDVKRRDLP (97 aa). The tract at residues 439–462 is disordered; it reads SREEFEEEMQQQQQQQAQRQRMAP. A compositionally biased stretch (low complexity) spans 448-462; it reads QQQQQQQAQRQRMAP.

Belongs to the FKBP-type PPIase family. Tig subfamily.

The protein localises to the cytoplasm. It catalyses the reaction [protein]-peptidylproline (omega=180) = [protein]-peptidylproline (omega=0). In terms of biological role, involved in protein export. Acts as a chaperone by maintaining the newly synthesized protein in an open conformation. Functions as a peptidyl-prolyl cis-trans isomerase. The sequence is that of Trigger factor from Salinibacter ruber (strain DSM 13855 / M31).